We begin with the raw amino-acid sequence, 337 residues long: Lipoyl synthase (337 aa).

7 residues coordinate [4Fe-4S] cluster: Cys-81, Cys-86, Cys-92, Cys-107, Cys-111, Cys-114, and Ser-323. One can recognise a Radical SAM core domain in the interval 93-312 (FSHGTATFMI…EEYGNALGFS (220 aa)).

Belongs to the radical SAM superfamily. Lipoyl synthase family. The cofactor is [4Fe-4S] cluster.

The protein localises to the cytoplasm. It carries out the reaction [[Fe-S] cluster scaffold protein carrying a second [4Fe-4S](2+) cluster] + N(6)-octanoyl-L-lysyl-[protein] + 2 oxidized [2Fe-2S]-[ferredoxin] + 2 S-adenosyl-L-methionine + 4 H(+) = [[Fe-S] cluster scaffold protein] + N(6)-[(R)-dihydrolipoyl]-L-lysyl-[protein] + 4 Fe(3+) + 2 hydrogen sulfide + 2 5'-deoxyadenosine + 2 L-methionine + 2 reduced [2Fe-2S]-[ferredoxin]. The protein operates within protein modification; protein lipoylation via endogenous pathway; protein N(6)-(lipoyl)lysine from octanoyl-[acyl-carrier-protein]: step 2/2. In terms of biological role, catalyzes the radical-mediated insertion of two sulfur atoms into the C-6 and C-8 positions of the octanoyl moiety bound to the lipoyl domains of lipoate-dependent enzymes, thereby converting the octanoylated domains into lipoylated derivatives. This chain is Lipoyl synthase, found in Xanthomonas campestris pv. campestris (strain 8004).